The sequence spans 282 residues: MTASTASAPLAFGDLQGCRTQFQQLLAKAAPPADAPLWFAGDLINRGGESLAMLRDIIALGDRAVPVLGNHDLHLLSVSAGIRKSKKGDTIDEILAAPDADDMLHWIRHRPLAHYENGMLLVHAGVLPQWDVDLTLELADELQRALRAPGWKETLAGLYGNEPNRWKPGLKGIDRLRLTCTALTRMRFCNADGVMDFSSSGGIGSAPAGFMPWFDVPGRKTEEITVVFGHWAALGLLIRDNLIGLDSGCVWGEQLSAVRLAQSAAERTVTQVECEGCRADVH.

The protein belongs to the Ap4A hydrolase family.

The enzyme catalyses P(1),P(4)-bis(5'-adenosyl) tetraphosphate + H2O = 2 ADP + 2 H(+). Functionally, hydrolyzes diadenosine 5',5'''-P1,P4-tetraphosphate to yield ADP. The sequence is that of Bis(5'-nucleosyl)-tetraphosphatase, symmetrical from Paraburkholderia phymatum (strain DSM 17167 / CIP 108236 / LMG 21445 / STM815) (Burkholderia phymatum).